Reading from the N-terminus, the 244-residue chain is tRNA (guanine-N(1)-)-methyltransferase (244 aa).

S-adenosyl-L-methionine is bound by residues Gly113 and 133–138 (IGDYVL).

It belongs to the RNA methyltransferase TrmD family. In terms of assembly, homodimer.

Its subcellular location is the cytoplasm. The enzyme catalyses guanosine(37) in tRNA + S-adenosyl-L-methionine = N(1)-methylguanosine(37) in tRNA + S-adenosyl-L-homocysteine + H(+). In terms of biological role, specifically methylates guanosine-37 in various tRNAs. The chain is tRNA (guanine-N(1)-)-methyltransferase from Bacillus anthracis (strain A0248).